The chain runs to 101 residues: Phosphoribosyl-ATP pyrophosphatase (101 aa).

Belongs to the PRA-PH family.

Its subcellular location is the cytoplasm. It carries out the reaction 1-(5-phospho-beta-D-ribosyl)-ATP + H2O = 1-(5-phospho-beta-D-ribosyl)-5'-AMP + diphosphate + H(+). The protein operates within amino-acid biosynthesis; L-histidine biosynthesis; L-histidine from 5-phospho-alpha-D-ribose 1-diphosphate: step 2/9. The chain is Phosphoribosyl-ATP pyrophosphatase from Natronomonas pharaonis (strain ATCC 35678 / DSM 2160 / CIP 103997 / JCM 8858 / NBRC 14720 / NCIMB 2260 / Gabara) (Halobacterium pharaonis).